The sequence spans 72 residues: Translation initiation factor IF-1 (72 aa).

The region spanning Met-1–Arg-72 is the S1-like domain.

This sequence belongs to the IF-1 family. As to quaternary structure, component of the 30S ribosomal translation pre-initiation complex which assembles on the 30S ribosome in the order IF-2 and IF-3, IF-1 and N-formylmethionyl-tRNA(fMet); mRNA recruitment can occur at any time during PIC assembly.

The protein resides in the cytoplasm. Its function is as follows. One of the essential components for the initiation of protein synthesis. Stabilizes the binding of IF-2 and IF-3 on the 30S subunit to which N-formylmethionyl-tRNA(fMet) subsequently binds. Helps modulate mRNA selection, yielding the 30S pre-initiation complex (PIC). Upon addition of the 50S ribosomal subunit IF-1, IF-2 and IF-3 are released leaving the mature 70S translation initiation complex. The protein is Translation initiation factor IF-1 of Shewanella frigidimarina (strain NCIMB 400).